Here is a 411-residue protein sequence, read N- to C-terminus: Tyrosine--tRNA ligase (411 aa).

Residue Tyr-34 coordinates L-tyrosine. Positions 39-48 (CTATSLHIGS) match the 'HIGH' region motif. Residues Tyr-171 and Gln-175 each contribute to the L-tyrosine site. A 'KMSKS' region motif is present at residues 231-235 (KMGKT). An ATP-binding site is contributed by Lys-234. An S4 RNA-binding domain is found at 345 to 411 (ISAYELFHEA…GKKRHILVRV (67 aa)).

This sequence belongs to the class-I aminoacyl-tRNA synthetase family. TyrS type 1 subfamily. Homodimer.

Its subcellular location is the cytoplasm. The catalysed reaction is tRNA(Tyr) + L-tyrosine + ATP = L-tyrosyl-tRNA(Tyr) + AMP + diphosphate + H(+). Its function is as follows. Catalyzes the attachment of tyrosine to tRNA(Tyr) in a two-step reaction: tyrosine is first activated by ATP to form Tyr-AMP and then transferred to the acceptor end of tRNA(Tyr). The chain is Tyrosine--tRNA ligase from Rickettsia felis (strain ATCC VR-1525 / URRWXCal2) (Rickettsia azadi).